The chain runs to 180 residues: MAKRVYAIAMRYAQALYELAKEQKSLDKWQEDLQDLSSLTEDASVAEFLSNPKIASARKHKVLAKLSNIDPLMLNLVDMLVATRRLGIMRAVSGEYNRLLNEARGVEDAIVTTAKPSSEADIEIIRQQLSKITGKKINVVTATDPGLIAGLKARIGDKLIDGSVSRRLVLLQNEISQGRI.

Belongs to the ATPase delta chain family. In terms of assembly, F-type ATPases have 2 components, F(1) - the catalytic core - and F(0) - the membrane proton channel. F(1) has five subunits: alpha(3), beta(3), gamma(1), delta(1), epsilon(1). F(0) has three main subunits: a(1), b(2) and c(10-14). The alpha and beta chains form an alternating ring which encloses part of the gamma chain. F(1) is attached to F(0) by a central stalk formed by the gamma and epsilon chains, while a peripheral stalk is formed by the delta and b chains.

The protein localises to the cell membrane. Its function is as follows. F(1)F(0) ATP synthase produces ATP from ADP in the presence of a proton or sodium gradient. F-type ATPases consist of two structural domains, F(1) containing the extramembraneous catalytic core and F(0) containing the membrane proton channel, linked together by a central stalk and a peripheral stalk. During catalysis, ATP synthesis in the catalytic domain of F(1) is coupled via a rotary mechanism of the central stalk subunits to proton translocation. Functionally, this protein is part of the stalk that links CF(0) to CF(1). It either transmits conformational changes from CF(0) to CF(1) or is implicated in proton conduction. This chain is ATP synthase subunit delta, found in Dehalococcoides mccartyi (strain ATCC BAA-2266 / KCTC 15142 / 195) (Dehalococcoides ethenogenes (strain 195)).